Here is a 739-residue protein sequence, read N- to C-terminus: Phosphoribosylformylglycinamidine synthase subunit PurL (739 aa).

Residue His-54 is part of the active site. ATP-binding residues include Tyr-57 and Lys-96. Residue Glu-98 participates in Mg(2+) binding. Residues 99–102 (SHNH) and Arg-121 contribute to the substrate site. The active-site Proton acceptor is His-100. Asp-122 is a Mg(2+) binding site. A substrate-binding site is contributed by Gln-245. Asp-275 is a binding site for Mg(2+). A substrate-binding site is contributed by 319 to 321 (ESQ). Residues Asp-504 and Gly-541 each coordinate ATP. A Mg(2+)-binding site is contributed by Asn-542. Ser-544 serves as a coordination point for substrate.

This sequence belongs to the FGAMS family. As to quaternary structure, monomer. Part of the FGAM synthase complex composed of 1 PurL, 1 PurQ and 2 PurS subunits.

The protein localises to the cytoplasm. It catalyses the reaction N(2)-formyl-N(1)-(5-phospho-beta-D-ribosyl)glycinamide + L-glutamine + ATP + H2O = 2-formamido-N(1)-(5-O-phospho-beta-D-ribosyl)acetamidine + L-glutamate + ADP + phosphate + H(+). The protein operates within purine metabolism; IMP biosynthesis via de novo pathway; 5-amino-1-(5-phospho-D-ribosyl)imidazole from N(2)-formyl-N(1)-(5-phospho-D-ribosyl)glycinamide: step 1/2. In terms of biological role, part of the phosphoribosylformylglycinamidine synthase complex involved in the purines biosynthetic pathway. Catalyzes the ATP-dependent conversion of formylglycinamide ribonucleotide (FGAR) and glutamine to yield formylglycinamidine ribonucleotide (FGAM) and glutamate. The FGAM synthase complex is composed of three subunits. PurQ produces an ammonia molecule by converting glutamine to glutamate. PurL transfers the ammonia molecule to FGAR to form FGAM in an ATP-dependent manner. PurS interacts with PurQ and PurL and is thought to assist in the transfer of the ammonia molecule from PurQ to PurL. The protein is Phosphoribosylformylglycinamidine synthase subunit PurL of Lactococcus lactis subsp. cremoris (Streptococcus cremoris).